A 219-amino-acid chain; its full sequence is uncharacterized protein (219 aa).

Phosphoserine is present on S23. A Glycyl lysine isopeptide (Lys-Gly) (interchain with G-Cter in SUMO) cross-link involves residue K137.

It localises to the cytoplasm. This is an uncharacterized protein from Saccharomyces cerevisiae (strain ATCC 204508 / S288c) (Baker's yeast).